A 596-amino-acid chain; its full sequence is Elongation factor 4 (596 aa).

The region spanning lysine 2–glutamate 184 is the tr-type G domain. GTP-binding positions include aspartate 14 to threonine 19 and asparagine 131 to aspartate 134.

It belongs to the TRAFAC class translation factor GTPase superfamily. Classic translation factor GTPase family. LepA subfamily.

It localises to the cell inner membrane. The enzyme catalyses GTP + H2O = GDP + phosphate + H(+). In terms of biological role, required for accurate and efficient protein synthesis under certain stress conditions. May act as a fidelity factor of the translation reaction, by catalyzing a one-codon backward translocation of tRNAs on improperly translocated ribosomes. Back-translocation proceeds from a post-translocation (POST) complex to a pre-translocation (PRE) complex, thus giving elongation factor G a second chance to translocate the tRNAs correctly. Binds to ribosomes in a GTP-dependent manner. In Shewanella halifaxensis (strain HAW-EB4), this protein is Elongation factor 4.